Consider the following 315-residue polypeptide: Phosphatidylglycerol--prolipoprotein diacylglyceryl transferase (315 aa).

A run of 2 helical transmembrane segments spans residues 19–39 (FTIHMYAICILIGICVAVWIL) and 93–113 (VWEGGMAIFGGISVGTLVAFL). Residue Arg-141 coordinates a 1,2-diacyl-sn-glycero-3-phospho-(1'-sn-glycerol). The next 2 helical transmembrane spans lie at 188-208 (LFHPTFLYEMIWNLIGAALII) and 256-276 (MWTAIIVFVLGCILFVVLYQY).

It belongs to the Lgt family.

It is found in the cell membrane. The enzyme catalyses L-cysteinyl-[prolipoprotein] + a 1,2-diacyl-sn-glycero-3-phospho-(1'-sn-glycerol) = an S-1,2-diacyl-sn-glyceryl-L-cysteinyl-[prolipoprotein] + sn-glycerol 1-phosphate + H(+). It participates in protein modification; lipoprotein biosynthesis (diacylglyceryl transfer). In terms of biological role, catalyzes the transfer of the diacylglyceryl group from phosphatidylglycerol to the sulfhydryl group of the N-terminal cysteine of a prolipoprotein, the first step in the formation of mature lipoproteins. This chain is Phosphatidylglycerol--prolipoprotein diacylglyceryl transferase, found in Bifidobacterium longum subsp. infantis (strain ATCC 15697 / DSM 20088 / JCM 1222 / NCTC 11817 / S12).